Reading from the N-terminus, the 928-residue chain is Echinoderm microtubule-associated protein-like 4 (928 aa).

The segment at M1–D189 is microtubule-binding. A coiled-coil region spans residues A14–R63. The interval S107 to S131 is disordered. The span at S116 to S131 shows a compositional bias: basic and acidic residues. WD repeat units lie at residues L199 to Y237, T241 to S288, V296 to W336, A343 to W378, R385 to K424, Q442 to H480, E485 to T521, D524 to S563, S567 to A604, V610 to V646, Y653 to I692, R702 to Y760, and A767 to L806. The segment at S821–S928 is disordered. Over residues Q836–Q845 the composition is skewed to polar residues. Residues D867–N876 show a composition bias toward acidic residues. Positions E877–E898 are enriched in polar residues.

Belongs to the WD repeat EMAP family. Homotrimer; self-association is mediated by the N-terminal coiled coil.

The protein localises to the cytoplasm. The protein resides in the cytoskeleton. It localises to the spindle. It is found in the microtubule organizing center. Its subcellular location is the midbody. Its function is as follows. Essential for the formation and stability of microtubules (MTs). Required for the organization of the mitotic spindle and for the proper attachment of kinetochores to MTs. Promotes the recruitment of NUDC to the mitotic spindle for mitotic progression. In Xenopus tropicalis (Western clawed frog), this protein is Echinoderm microtubule-associated protein-like 4 (eml4).